The sequence spans 457 residues: Solute carrier family 38 member 6 (457 aa).

Met-1 carries the post-translational modification N-acetylmethionine. A phosphoserine mark is found at Ser-4 and Ser-7. 5 helical membrane passes run 48-68, 70-90, 112-132, 171-191, and 192-212; these read FGLSVFNVMNAIMGSGILGLA, VMANTGILGFSFLLLLVALLA, LGLFAFGLPGKVVVAGTIIIQ, LLIIICVGIVFPLSLLPKIGF, and LGYTSSLSFFFMVFFALVVVI. Cys-219 and Cys-239 are oxidised to a cystine. Asn-234 carries N-linked (GlcNAc...) asparagine glycosylation. Residues 251 to 271 form a helical membrane-spanning segment; sequence VYAIPTMAFSFLCHTSVLPIY. N-linked (GlcNAc...) asparagine glycosylation occurs at Asn-284. 5 helical membrane passes run 289–309, 328–348, 372–392, 395–415, and 432–452; these read AIALSFLVYFVSALFGYLTFY, AAVMAVKLCILFAVLLTVPLI, SLTTLALNIIIVLLAIYVPDI, VFGVVGASTSTCLIFVFPGLF, and ALSLLSTGTVVGSFSLVLIIL.

The protein belongs to the amino acid/polyamine transporter 2 family.

The protein localises to the cell membrane. Its subcellular location is the synapse. The enzyme catalyses L-glutamine(out) = L-glutamine(in). It carries out the reaction L-glutamate(out) = L-glutamate(in). In terms of biological role, amino acid transporter with an apparent selectivity for L-glutamine and L-glutamate. May facilitate glutamine uptake in excitatory neurons. The transport mechanism remains to be elucidated. This chain is Solute carrier family 38 member 6, found in Rattus norvegicus (Rat).